An 855-amino-acid chain; its full sequence is Dynein axonemal assembly factor 5 (855 aa).

Alanine 2 is subject to N-acetylalanine. 10 HEAT repeats span residues 71–109, 202–240, 241–278, 280–318, 354–376, 377–414, 599–638, 696–734, 738–776, and 784–822; these read GPWARLLLPRLLRCLSDPAEGCRALAVHLLDLGLRRAAR, HMQSESLIGPLMQTISHQHWKVRVAAIEATGAVIHFGNG, KSVDDVLSHFAQRLFDDVPQVRRAVASVVGGWLLCLRD, YSFFHKLIPLLLSSLNDEVPEVRQLAASLWEDVGLQWQK, FRNLSKILPALCHDITDWVVGTR, VKSAQLLPVLLLHAEDHATQHLEVVLRTLFQACTDEEA, GEALPHVVPTLRACLQPSQDPQMRLKLFSILSTVLLRATD, RDVQETLMPQVLTTLEEDSKMTRLISCRIINTFLKTSGG, PEKLIRIYPELLKRLDDVSNDVRMAAASTLVTWLQCVKG, and QSSVQYLYRELLVHLDDPERAIQDAILEVLKEGSGLFPD.

The protein belongs to the DNAAF5 family. As to quaternary structure, interacts with DNAI2; probably involved in outer arm dynein assembly. As to expression, expressed in nasal epithelium and lung epithelium by ciliated cells (at protein level).

It localises to the cytoplasm. Its subcellular location is the dynein axonemal particle. In terms of biological role, cytoplasmic protein involved in the delivery of the dynein machinery to the motile cilium. It is required for the assembly of the axonemal dynein inner and outer arms, two structures attached to the peripheral outer doublet A microtubule of the axoneme, that play a crucial role in cilium motility. In Homo sapiens (Human), this protein is Dynein axonemal assembly factor 5.